Reading from the N-terminus, the 350-residue chain is Xylene/toluene monooxygenase electron transfer component XylA (350 aa).

Positions 16-108 (PESTVSVRGQ…DLEIELDTVL (93 aa)) constitute a 2Fe-2S ferredoxin-type domain. [2Fe-2S] cluster is bound by residues Cys52, Cys57, Cys60, and Cys92. Residues 109 to 350 (GQALVPIETS…ADRFYNRPPC (242 aa)) form a ferredoxin--NADH reductase region. The FAD-binding FR-type domain maps to 114-213 (PIETSALISK…RAPYGQFGLH (100 aa)).

Belongs to the bacterial ring-hydroxylating dioxygenase ferredoxin reductase family. As to quaternary structure, monomer. The xylene/toluene monooxygenase is composed of two subunits: the electron transfer component XylA and the hydroxylase component XylM. Requires FAD as cofactor. [2Fe-2S] cluster is required as a cofactor.

The protein resides in the cell inner membrane. The enzyme catalyses 2 reduced [2Fe-2S]-[ferredoxin] + NAD(+) + H(+) = 2 oxidized [2Fe-2S]-[ferredoxin] + NADH. Its activity is regulated as follows. The reductase activity is completely inhibited by quercetin (a common inhibitor of mammalian oxidoreductases) and p-chloromercuribenzoate, but not by iodoacetimide, N-ethylmaleimide and pyrrazole. Functionally, component of a monooxygenase that catalyzes the first step in the degradation of xylenes and toluenes. XylA is responsible for the transport of electrons from the electron donor NADH to the terminal hydroxylase component, XylM. This Pseudomonas putida (Arthrobacter siderocapsulatus) protein is Xylene/toluene monooxygenase electron transfer component XylA.